A 375-amino-acid polypeptide reads, in one-letter code: tRNA-specific 2-thiouridylase MnmA (375 aa).

ATP-binding positions include Gly12–Ser19 and Met38. The interaction with target base in tRNA stretch occupies residues Asn98–Asp100. Residue Cys103 is the Nucleophile of the active site. Cys103 and Cys200 form a disulfide bridge. Gly127 is a binding site for ATP. The tract at residues Lys150–Gln152 is interaction with tRNA. The active-site Cysteine persulfide intermediate is the Cys200. Residues Arg312–Tyr313 are interaction with tRNA.

The protein belongs to the MnmA/TRMU family.

It is found in the cytoplasm. It catalyses the reaction S-sulfanyl-L-cysteinyl-[protein] + uridine(34) in tRNA + AH2 + ATP = 2-thiouridine(34) in tRNA + L-cysteinyl-[protein] + A + AMP + diphosphate + H(+). Its function is as follows. Catalyzes the 2-thiolation of uridine at the wobble position (U34) of tRNA, leading to the formation of s(2)U34. The polypeptide is tRNA-specific 2-thiouridylase MnmA (Lactobacillus delbrueckii subsp. bulgaricus (strain ATCC 11842 / DSM 20081 / BCRC 10696 / JCM 1002 / NBRC 13953 / NCIMB 11778 / NCTC 12712 / WDCM 00102 / Lb 14)).